Consider the following 109-residue polypeptide: Mitochondrial pyruvate carrier 2 (109 aa).

The next 3 helical transmembrane spans lie at isoleucine 19 to isoleucine 35, isoleucine 51 to isoleucine 67, and leucine 74 to threonine 90.

This sequence belongs to the mitochondrial pyruvate carrier (MPC) (TC 2.A.105) family.

The protein resides in the mitochondrion inner membrane. Mediates the uptake of pyruvate into mitochondria. This is Mitochondrial pyruvate carrier 2 from Arabidopsis thaliana (Mouse-ear cress).